A 96-amino-acid polypeptide reads, in one-letter code: Co-chaperonin GroES (96 aa).

This sequence belongs to the GroES chaperonin family. As to quaternary structure, heptamer of 7 subunits arranged in a ring. Interacts with the chaperonin GroEL.

The protein localises to the cytoplasm. Its function is as follows. Together with the chaperonin GroEL, plays an essential role in assisting protein folding. The GroEL-GroES system forms a nano-cage that allows encapsulation of the non-native substrate proteins and provides a physical environment optimized to promote and accelerate protein folding. GroES binds to the apical surface of the GroEL ring, thereby capping the opening of the GroEL channel. This Chromohalobacter salexigens (strain ATCC BAA-138 / DSM 3043 / CIP 106854 / NCIMB 13768 / 1H11) protein is Co-chaperonin GroES.